The chain runs to 296 residues: Phosphatidylglycerol--prolipoprotein diacylglyceryl transferase (296 aa).

7 consecutive transmembrane segments (helical) span residues 17 to 37 (LAVR…IVVG), 59 to 79 (MMFY…VLFY), 97 to 117 (GGMS…LFAW), 129 to 149 (FVAP…FING), 203 to 223 (PSQL…LFFF), 230 to 250 (LGAV…TVEF), and 265 to 285 (LSMG…LLVW). Arg142 serves as a coordination point for a 1,2-diacyl-sn-glycero-3-phospho-(1'-sn-glycerol).

It belongs to the Lgt family.

Its subcellular location is the cell inner membrane. It catalyses the reaction L-cysteinyl-[prolipoprotein] + a 1,2-diacyl-sn-glycero-3-phospho-(1'-sn-glycerol) = an S-1,2-diacyl-sn-glyceryl-L-cysteinyl-[prolipoprotein] + sn-glycerol 1-phosphate + H(+). Its pathway is protein modification; lipoprotein biosynthesis (diacylglyceryl transfer). Its function is as follows. Catalyzes the transfer of the diacylglyceryl group from phosphatidylglycerol to the sulfhydryl group of the N-terminal cysteine of a prolipoprotein, the first step in the formation of mature lipoproteins. The sequence is that of Phosphatidylglycerol--prolipoprotein diacylglyceryl transferase from Burkholderia ambifaria (strain MC40-6).